We begin with the raw amino-acid sequence, 424 residues long: S-adenosylmethionine synthase (424 aa).

Residue H16 participates in ATP binding. D18 lines the Mg(2+) pocket. Residue E44 participates in K(+) binding. Residues E57 and Q100 each contribute to the L-methionine site. Residues 100–110 (QSPDIAQGVNT) form a flexible loop region. ATP is bound by residues 175-177 (DGK), 251-252 (KF), D260, 266-267 (RK), A283, and K287. Residue D260 coordinates L-methionine. K291 provides a ligand contact to L-methionine.

Belongs to the AdoMet synthase family. In terms of assembly, homotetramer; dimer of dimers. Requires Mg(2+) as cofactor. The cofactor is K(+).

The protein resides in the cytoplasm. It carries out the reaction L-methionine + ATP + H2O = S-adenosyl-L-methionine + phosphate + diphosphate. It functions in the pathway amino-acid biosynthesis; S-adenosyl-L-methionine biosynthesis; S-adenosyl-L-methionine from L-methionine: step 1/1. Functionally, catalyzes the formation of S-adenosylmethionine (AdoMet) from methionine and ATP. The overall synthetic reaction is composed of two sequential steps, AdoMet formation and the subsequent tripolyphosphate hydrolysis which occurs prior to release of AdoMet from the enzyme. This chain is S-adenosylmethionine synthase, found in Nostoc punctiforme (strain ATCC 29133 / PCC 73102).